The sequence spans 294 residues: Retinoic acid receptor responder protein 1 (294 aa).

Over 1-20 (MQPRRQRLPAPWSGPRGPRP) the chain is Lumenal. Residues 21-42 (TAPLLALLLLLAPVAAPAGSGD) form a helical; Signal-anchor for type III membrane protein membrane-spanning segment. Cystatin LXN-type domains lie at 38–153 (AGSG…EKKK) and 173–276 (EIVS…TPEE). O-linked (Xyl...) (chondroitin sulfate) serine glycosylation is present at Ser40. The Cytoplasmic segment spans residues 43 to 294 (PDDPGQPQDA…AVVPTELSNF (252 aa)). The tract at residues 273–294 (TPEEASGTEEGSAVVPTELSNF) is disordered.

It belongs to the protease inhibitor I47 (latexin) family. Interacts with AGBL2, KIF11 and MAPRE1. Post-translationally, not N-glycosylated. O-glycosylated; contains chondroitin sulfate. In terms of tissue distribution, detected in urine (at protein level).

It is found in the membrane. The protein resides in the secreted. Functionally, inhibitor of the cytoplasmic carboxypeptidase AGBL2, may regulate the alpha-tubulin tyrosination cycle. In Homo sapiens (Human), this protein is Retinoic acid receptor responder protein 1 (RARRES1).